A 321-amino-acid chain; its full sequence is MMAVTNGVIHASSREPLFSFGVIADVQYADIPDGRSFLGVPRYYRHSISVLQRAVSTWNKQHNIKFSINFGDIIDGYCPKDKSLWAVQKVLDEFEKFDGPTYHMFGNHCLYNLPRGKLVSLLKMPTDSDRAYYDFSPCPEYRFVVLDAYDFSALGWPRDHPVTAEAMKFLEEKNPNSDKNSPDGLVGVDRRFVMFNGGVGKEQLSWLNDVLQDASARRQNVILCSHLPMDPGSASFAALMWNYDEVMAIVRQYKCVKACFAGHDHKGGHSVDSHGVHHRTLEAALECPPGTSAFGHIEVYPDKLLLVGSDKMADTEMCFEP.

7 residues coordinate Zn(2+): aspartate 25, glutamine 27, aspartate 72, asparagine 107, histidine 226, histidine 263, and histidine 265.

The protein belongs to the ADPRibase-Mn family. Monomer. Mg(2+) serves as cofactor.

The enzyme catalyses CDP-choline + H2O = phosphocholine + CMP + 2 H(+). It catalyses the reaction ADP-D-ribose + H2O = D-ribose 5-phosphate + AMP + 2 H(+). It carries out the reaction CDP-glycerol + H2O = sn-glycerol 3-phosphate + CMP + 2 H(+). Hydrolyzes ADP-ribose, IDP-ribose, CDP-glycerol, CDP-choline and CDP-ethanolamine, but not other non-reducing ADP-sugars or CDP-glucose. The sequence is that of Manganese-dependent ADP-ribose/CDP-alcohol diphosphatase from Oryza sativa subsp. japonica (Rice).